We begin with the raw amino-acid sequence, 291 residues long: MKNAILIDGNSLAYRAYFATWQQVEFAKLHNLPFNNAIRTMLMMCWNLLQSKQYDYGVISFDTKAPTFRDQLYSEYKSKRSKTPSELLVQIPVVKESLRHLGFLVCEQDGFEADDLIGSYARLMTQNNVAVDIYSSDRDLLQLVDSMTSVWLCVKGTKEMKEYNTDNFAEQFFGLTPKQVIEYKGLVGDNSDNLTGIKGIGPKKGIDLLKQYGTIDNIFANFDKLSKALQTILQGQIDTAKKFSFLASIKTDIKLNDDIVHAALKPIDKQALLELLDKYGIKALAQKFSQL.

Residues 176–269 (TPKQVIEYKG…VHAALKPIDK (94 aa)) form the 5'-3' exonuclease domain.

Its function is as follows. 5'-3' exonuclease acting preferentially on double-stranded DNA. The sequence is that of 5'-3' exonuclease (polA) from Mycoplasma pneumoniae (strain ATCC 29342 / M129 / Subtype 1) (Mycoplasmoides pneumoniae).